The following is a 99-amino-acid chain: NADH-quinone oxidoreductase subunit K (99 aa).

The next 3 membrane-spanning stretches (helical) occupy residues 3–23 (PDNY…GVML), 28–48 (IVVF…FVTF), and 59–79 (VIAF…LGII).

This sequence belongs to the complex I subunit 4L family. As to quaternary structure, NDH-1 is composed of 14 different subunits. Subunits NuoA, H, J, K, L, M, N constitute the membrane sector of the complex.

It is found in the cell membrane. The enzyme catalyses a quinone + NADH + 5 H(+)(in) = a quinol + NAD(+) + 4 H(+)(out). Its function is as follows. NDH-1 shuttles electrons from NADH, via FMN and iron-sulfur (Fe-S) centers, to quinones in the respiratory chain. The immediate electron acceptor for the enzyme in this species is believed to be a menaquinone. Couples the redox reaction to proton translocation (for every two electrons transferred, four hydrogen ions are translocated across the cytoplasmic membrane), and thus conserves the redox energy in a proton gradient. This chain is NADH-quinone oxidoreductase subunit K, found in Mycobacteroides abscessus (strain ATCC 19977 / DSM 44196 / CCUG 20993 / CIP 104536 / JCM 13569 / NCTC 13031 / TMC 1543 / L948) (Mycobacterium abscessus).